A 715-amino-acid chain; its full sequence is Zinc finger protein 544 (715 aa).

The KRAB domain occupies valine 14 to alanine 85. Residues lysine 273 and lysine 289 each participate in a glycyl lysine isopeptide (Lys-Gly) (interchain with G-Cter in SUMO2) cross-link. Residues serine 354–histidine 374 form a C2H2-type 1; atypical zinc finger. C2H2-type zinc fingers lie at residues phenylalanine 380–histidine 402, tyrosine 408–histidine 430, tyrosine 436–histidine 458, tyrosine 464–histidine 486, phenylalanine 492–histidine 514, tyrosine 520–histidine 542, tyrosine 548–histidine 570, tyrosine 576–histidine 598, tyrosine 604–histidine 626, tyrosine 632–histidine 654, phenylalanine 660–histidine 682, and tyrosine 688–histidine 710. Lysine 534 participates in a covalent cross-link: Glycyl lysine isopeptide (Lys-Gly) (interchain with G-Cter in SUMO2).

Belongs to the krueppel C2H2-type zinc-finger protein family.

It localises to the nucleus. May be involved in transcriptional regulation. The sequence is that of Zinc finger protein 544 (ZNF544) from Homo sapiens (Human).